The sequence spans 136 residues: Nucleoside diphosphate kinase (136 aa).

Residues K10, F58, R86, T92, R104, and N114 each coordinate ATP. The active-site Pros-phosphohistidine intermediate is H117.

It belongs to the NDK family. In terms of assembly, homotetramer. Requires Mg(2+) as cofactor.

Its subcellular location is the cytoplasm. It carries out the reaction a 2'-deoxyribonucleoside 5'-diphosphate + ATP = a 2'-deoxyribonucleoside 5'-triphosphate + ADP. The enzyme catalyses a ribonucleoside 5'-diphosphate + ATP = a ribonucleoside 5'-triphosphate + ADP. In terms of biological role, major role in the synthesis of nucleoside triphosphates other than ATP. The ATP gamma phosphate is transferred to the NDP beta phosphate via a ping-pong mechanism, using a phosphorylated active-site intermediate. The polypeptide is Nucleoside diphosphate kinase (Saccharopolyspora erythraea (strain ATCC 11635 / DSM 40517 / JCM 4748 / NBRC 13426 / NCIMB 8594 / NRRL 2338)).